A 394-amino-acid chain; its full sequence is Phosphopentomutase (394 aa).

Residues Asp14, Asp287, His292, Asp328, His329, and His340 each contribute to the Mn(2+) site.

Belongs to the phosphopentomutase family. Mn(2+) is required as a cofactor.

Its subcellular location is the cytoplasm. It carries out the reaction 2-deoxy-alpha-D-ribose 1-phosphate = 2-deoxy-D-ribose 5-phosphate. It catalyses the reaction alpha-D-ribose 1-phosphate = D-ribose 5-phosphate. It functions in the pathway carbohydrate degradation; 2-deoxy-D-ribose 1-phosphate degradation; D-glyceraldehyde 3-phosphate and acetaldehyde from 2-deoxy-alpha-D-ribose 1-phosphate: step 1/2. Functionally, isomerase that catalyzes the conversion of deoxy-ribose 1-phosphate (dRib-1-P) and ribose 1-phosphate (Rib-1-P) to deoxy-ribose 5-phosphate (dRib-5-P) and ribose 5-phosphate (Rib-5-P), respectively. This chain is Phosphopentomutase, found in Listeria monocytogenes serotype 4a (strain HCC23).